The primary structure comprises 335 residues: Probable cytosolic iron-sulfur protein assembly protein Ciao1 (335 aa).

WD repeat units follow at residues 12–51 (GHKG…WSTK), 57–96 (GHKR…FECN), 101–140 (GHEN…EFEC), 146–185 (PHTQ…NDWD), 192–231 (SHTS…NTAG), 250–289 (QHSR…KPDE), and 301–335 (AHDQ…KVSE).

Belongs to the WD repeat CIA1 family.

Essential component of the cytosolic iron-sulfur (Fe/S) protein assembly machinery. Required for the maturation of extramitochondrial Fe/S proteins. The chain is Probable cytosolic iron-sulfur protein assembly protein Ciao1 from Drosophila simulans (Fruit fly).